The sequence spans 178 residues: MKKLLIVTMLFTLALSAQAQWYVQGDLGASKIDITHVNSSNSPSFTQRISVGYAFDKNFRLAVDYTNYGKVTANYADVVDVSLKGKSLGLTGFYDFDLADFKPYVGVRVSTNGADVTANARYYRIEAFATETRIGIGALAGVQYKLTDNVALNTNIEYNRLASNVSDVGVKAGLRFSF.

Residues 1 to 19 (MKKLLIVTMLFTLALSAQA) form the signal peptide.

This sequence belongs to the opacity porin family.

This is an uncharacterized protein from Haemophilus influenzae (strain ATCC 51907 / DSM 11121 / KW20 / Rd).